A 93-amino-acid chain; its full sequence is Ribonuclease P protein component 4 (93 aa).

C55, C58, C81, and C83 together coordinate Zn(2+).

It belongs to the eukaryotic/archaeal RNase P protein component 4 family. As to quaternary structure, consists of a catalytic RNA component and at least 4-5 protein subunits. The cofactor is Zn(2+).

The protein resides in the cytoplasm. The catalysed reaction is Endonucleolytic cleavage of RNA, removing 5'-extranucleotides from tRNA precursor.. Its function is as follows. Part of ribonuclease P, a protein complex that generates mature tRNA molecules by cleaving their 5'-ends. This is Ribonuclease P protein component 4 from Halobacterium salinarum (strain ATCC 29341 / DSM 671 / R1).